The chain runs to 556 residues: Phenylalanine--tRNA ligase beta subunit (556 aa).

The B5 domain maps to 278 to 353 (LTPKRFEVEL…IAYGYNNIEP (76 aa)). D331, D337, E340, and D341 together coordinate Mg(2+).

This sequence belongs to the phenylalanyl-tRNA synthetase beta subunit family. Type 2 subfamily. Tetramer of two alpha and two beta subunits. It depends on Mg(2+) as a cofactor.

It localises to the cytoplasm. It carries out the reaction tRNA(Phe) + L-phenylalanine + ATP = L-phenylalanyl-tRNA(Phe) + AMP + diphosphate + H(+). In Pyrococcus abyssi (strain GE5 / Orsay), this protein is Phenylalanine--tRNA ligase beta subunit.